Here is a 1202-residue protein sequence, read N- to C-terminus: PAN2-PAN3 deadenylation complex catalytic subunit PAN2 (1202 aa).

WD repeat units lie at residues 153-193, 195-231, 244-280, and 328-367; these read DENE…QKYA, ETPG…VEHE, VHGN…AITP, and PVGP…SFNP. Residues 368–485 are linker; that stretch reads YSRETEFALP…VGREEEPHLH (118 aa). The region spanning 486–924 is the USP domain; sequence MVSKKYRKVT…VPAILYYVKR (439 aa). S791 is subject to Phosphoserine. The Exonuclease domain maps to 975–1147; that stretch reads VGLDAEFVTL…EDARTALQLY (173 aa). D978, E980, D1087, and D1139 together coordinate a divalent metal cation. Residue S1189 is modified to Phosphoserine.

It belongs to the peptidase C19 family. PAN2 subfamily. Forms a heterotrimer with an asymmetric homodimer of the regulatory subunit PAN3 to form the poly(A)-nuclease (PAN) deadenylation complex. Interacts with PAN3 isoform 1/Pan3L and isoform 3/Pan3S. Interacts with ZFP36. The cofactor is a divalent metal cation.

The protein localises to the cytoplasm. The protein resides in the P-body. It is found in the nucleus. It catalyses the reaction Exonucleolytic cleavage of poly(A) to 5'-AMP.. Its activity is regulated as follows. Positively regulated by the regulatory subunit PAN3. Functionally, catalytic subunit of the poly(A)-nuclease (PAN) deadenylation complex, one of two cytoplasmic mRNA deadenylases involved in general and miRNA-mediated mRNA turnover. PAN specifically shortens poly(A) tails of RNA and the activity is stimulated by poly(A)-binding protein (PABP). PAN deadenylation is followed by rapid degradation of the shortened mRNA tails by the CCR4-NOT complex. Deadenylated mRNAs are then degraded by two alternative mechanisms, namely exosome-mediated 3'-5' exonucleolytic degradation, or deadenylation-dependent mRNA decaping and subsequent 5'-3' exonucleolytic degradation by XRN1. Also acts as an important regulator of the HIF1A-mediated hypoxic response. Required for HIF1A mRNA stability independent of poly(A) tail length regulation. The sequence is that of PAN2-PAN3 deadenylation complex catalytic subunit PAN2 from Homo sapiens (Human).